A 189-amino-acid chain; its full sequence is GMP synthase [glutamine-hydrolyzing] subunit A (189 aa).

The Glutamine amidotransferase type-1 domain maps to 1-189 (MIVILNNGGQ…CKVCGFKFNE (189 aa)). Catalysis depends on cysteine 76, which acts as the Nucleophile. Active-site residues include histidine 163 and glutamate 165.

As to quaternary structure, heterodimer composed of a glutamine amidotransferase subunit (A) and a GMP-binding subunit (B).

It carries out the reaction XMP + L-glutamine + ATP + H2O = GMP + L-glutamate + AMP + diphosphate + 2 H(+). It functions in the pathway purine metabolism; GMP biosynthesis; GMP from XMP (L-Gln route): step 1/1. In terms of biological role, catalyzes the synthesis of GMP from XMP. The sequence is that of GMP synthase [glutamine-hydrolyzing] subunit A from Methanococcus vannielii (strain ATCC 35089 / DSM 1224 / JCM 13029 / OCM 148 / SB).